The chain runs to 222 residues: Voltage-dependent calcium channel gamma-1 subunit (222 aa).

The Cytoplasmic segment spans residues 1–10; the sequence is MSPTEAPKVR. A helical transmembrane segment spans residues 11–29; sequence VTLFCILVGIVLAMTAVVS. The Extracellular segment spans residues 30–108; it reads DHWAVLSPHM…TQKEYSISAA (79 aa). N-linked (GlcNAc...) asparagine glycosylation is found at asparagine 43 and asparagine 79. Residues cysteine 57 and cysteine 80 are joined by a disulfide bond. Residues 109–129 traverse the membrane as a helical segment; that stretch reads AISVFSLGFLIMGTICALMAF. Over 130–134 the chain is Cytoplasmic; sequence RKKRD. The chain crosses the membrane as a helical span at residues 135–155; sequence YLLRPASMFYVFAGLCLFVSL. Residues 156–179 lie on the Extracellular side of the membrane; it reads EVMRQSVKRMIDSEDTVWIEYYYS. Residues 180-204 form a helical membrane-spanning segment; the sequence is WSFACACAAFVLLFLGGISLLLFSL. Residues 205–222 are Cytoplasmic-facing; it reads PRMPQNPWESCMDAEPEH.

Belongs to the PMP-22/EMP/MP20 family. CACNG subfamily. In terms of assembly, component of a calcium channel complex consisting of a pore-forming alpha subunit (CACNA1S) and the ancillary subunits CACNB1 or CACNB2, CACNG1 and CACNA2D1. The channel complex contains alpha, beta, gamma and delta subunits in a 1:1:1:1 ratio, i.e. it contains either CACNB1 or CACNB2. Post-translationally, N-glycosylated. Skeletal muscle (at protein level).

It localises to the cell membrane. The protein resides in the sarcolemma. Its function is as follows. Regulatory subunit of the voltage-gated calcium channel that gives rise to L-type calcium currents in skeletal muscle. Regulates channel inactivation kinetics. The polypeptide is Voltage-dependent calcium channel gamma-1 subunit (CACNG1) (Oryctolagus cuniculus (Rabbit)).